The chain runs to 107 residues: Iron-sulfur cluster assembly protein CyaY (107 aa).

Belongs to the frataxin family.

Its function is as follows. Involved in iron-sulfur (Fe-S) cluster assembly. May act as a regulator of Fe-S biogenesis. The protein is Iron-sulfur cluster assembly protein CyaY of Neisseria meningitidis serogroup C / serotype 2a (strain ATCC 700532 / DSM 15464 / FAM18).